We begin with the raw amino-acid sequence, 171 residues long: Shikimate kinase (171 aa).

14–19 (GAGKST) contributes to the ATP binding site. Residue S18 coordinates Mg(2+). Substrate is bound by residues D36, R60, and G82. R120 is a binding site for ATP. Position 139 (R139) interacts with substrate. Q156 lines the ATP pocket.

It belongs to the shikimate kinase family. In terms of assembly, monomer. Mg(2+) serves as cofactor.

It is found in the cytoplasm. The catalysed reaction is shikimate + ATP = 3-phosphoshikimate + ADP + H(+). It functions in the pathway metabolic intermediate biosynthesis; chorismate biosynthesis; chorismate from D-erythrose 4-phosphate and phosphoenolpyruvate: step 5/7. Functionally, catalyzes the specific phosphorylation of the 3-hydroxyl group of shikimic acid using ATP as a cosubstrate. The sequence is that of Shikimate kinase from Shewanella sp. (strain ANA-3).